A 442-amino-acid polypeptide reads, in one-letter code: UPF0597 protein HRM2_02820 (442 aa).

The protein belongs to the UPF0597 family.

The chain is UPF0597 protein HRM2_02820 from Desulforapulum autotrophicum (strain ATCC 43914 / DSM 3382 / VKM B-1955 / HRM2) (Desulfobacterium autotrophicum).